The sequence spans 2171 residues: Mediator of DNA damage checkpoint protein 1 (2171 aa).

Residues 1-19 show a composition bias toward acidic residues; it reads MEDTQAIDWDVEEEEETEQ. Positions 1–22 are disordered; the sequence is MEDTQAIDWDVEEEEETEQSSE. Residues 1–150 form an interaction with CHEK2 region; the sequence is MEDTQAIDWD…SRGPLTVEET (150 aa). The tract at residues 2 to 220 is interaction with the MRN complex; sequence EDTQAIDWDV…PFAFNLNSDT (219 aa). T4 is modified (phosphothreonine). The FHA domain maps to 54–105; it reads NVVGRMPDCSVALPFPSISKQHAEIEILAWDKAPILRDCGSLNGTQILRPPK. Position 108 is a phosphoserine (S108). The tract at residues 145 to 568 is required for nuclear localization (NLS1); the sequence is LTVEETPRVQ…PAKLLVVSLE (424 aa). T146 bears the Phosphothreonine mark. Phosphoserine is present on residues S168, S176, S196, and S218. Disordered stretches follow at residues 185 to 248 and 261 to 317; these read RTTS…AKQS and DQPL…AEVH. T220 is modified (phosphothreonine). A compositionally biased stretch (basic and acidic residues) spans 261–278; sequence DQPLVKERDDDTKVKRGA. Phosphoserine is present on S299. T301 carries the post-translational modification Phosphothreonine. The span at 306–317 shows a compositional bias: basic and acidic residues; sequence DSRPPGRPAEVH. S329 is modified (phosphoserine). The residue at position 331 (T331) is a Phosphothreonine. The segment at 355-387 is disordered; that stretch reads GVGTRGPGAPGLAHLQESQAGSDTDVEEGKAPQ. Residues S372 and S376 each carry the phosphoserine modification. T378 is subject to Phosphothreonine. Phosphoserine occurs at positions 394, 397, and 402. T404 is modified (phosphothreonine). A Phosphoserine modification is found at S411. Disordered regions lie at residues 443–469 and 481–522; these read QRSQTTTERDSDTDVEEEELPVENREA and VRAH…VDIN. T449 bears the Phosphothreonine mark. Position 453 is a phosphoserine (S453). A Phosphothreonine modification is found at T455. A phosphoserine mark is found at S485, S495, S498, S504, S505, and S513. Polar residues predominate over residues 513-522; it reads SQASTTVDIN. T523 is modified (phosphothreonine). A Phosphoserine modification is found at S590. K616 is covalently cross-linked (Glycyl lysine isopeptide (Lys-Gly) (interchain with G-Cter in SUMO1); alternate). K616 participates in a covalent cross-link: Glycyl lysine isopeptide (Lys-Gly) (interchain with G-Cter in SUMO2); alternate. Disordered stretches follow at residues 653-689 and 780-1969; these read DTLGESTQPQREGAQVPTGREREQHVGGTKDSEDNYG and SPPR…TKLN. Basic and acidic residues predominate over residues 671–685; it reads GREREQHVGGTKDSE. Phosphoserine occurs at positions 780 and 793. Residue K812 is modified to N6-acetyllysine. 4 stretches are compositionally biased toward basic and acidic residues: residues 819–844, 851–862, 868–905, and 914–951; these read ETAERVGPERGPLERETEKLLPERQT, ELTKGKQDREQK, DTQRQESDKNGESASPERDRESLKVEIETSEEIQEKQV, and AFEREVERPVANRECDPAELEEKVPKVILERDTQRGEP. S955 and S998 each carry phosphoserine. Over residues 955 to 964 the composition is skewed to polar residues; that stretch reads SQDQKGQASS. Residues 1016–1031 are compositionally biased toward basic and acidic residues; the sequence is KASRIRAAEKVSRGDQ. At S1033 the chain carries Phosphoserine. Residues 1040–1051 are compositionally biased toward pro residues; the sequence is PTVPEAPAPPQK. Residues S1068 and S1086 each carry the phosphoserine modification. A compositionally biased stretch (basic residues) spans 1103–1113; sequence PKPKIRTRKSS. Composition is skewed to polar residues over residues 1129–1157 and 1170–1187; these read PSTSTAQPVTPKPTSQATRSRTNRSSVKT and PCTSTDQPVTSEPTSQVT. The interaction with the PRKDC complex stretch occupies residues 1148–1692; the sequence is SRTNRSSVKT…TNRSSVKTPE (545 aa). T1157 is modified (phosphothreonine). A Phosphothreonine modification is found at T1198. Polar residues predominate over residues 1210-1227; the sequence is QPSTSTDRPVTSEPTSHA. S1235 bears the Phosphoserine mark. T1239 is subject to Phosphothreonine. The segment covering 1251-1268 has biased composition (polar residues); it reads QPSTSTDQPVTSEPTYQA. Phosphothreonine is present on residues T1280 and T1302. The span at 1306 to 1318 shows a compositional bias: low complexity; the sequence is TSRTTRSRTNMSS. Composition is skewed to polar residues over residues 1334 to 1350 and 1375 to 1403; these read PSTSTEQPVTPEPTSRA and PSTSTDQPVTPEPTSQATRGRTNRSSVKT. Low complexity predominate over residues 1429-1441; it reads TSRTTRSRTNMSS. Residues 1457-1473 show a composition bias toward polar residues; the sequence is PSTSTEQPVTPEPTSRA. Residues S1481 and S1482 each carry the phosphoserine modification. K1484 is modified (N6-acetyllysine). T1485 is subject to Phosphothreonine. Residue K1495 forms a Glycyl lysine isopeptide (Lys-Gly) (interchain with G-Cter in SUMO1); alternate linkage. A Glycyl lysine isopeptide (Lys-Gly) (interchain with G-Cter in SUMO2); alternate cross-link involves residue K1495. Polar residues-rich tracts occupy residues 1498 to 1526, 1538 to 1557, and 1580 to 1596; these read PSTSTDQPVTPEPTSQATRGRTNRSSVKT, QPSTSTDQPVTPEPTSQVTR, and ASASTDQPVTSEPTSRT. Phosphothreonine is present on residues T1507 and T1548. A phosphothreonine mark is found at T1615 and T1630. Polar residues-rich tracts occupy residues 1620–1649 and 1661–1678; these read QPSTSTDQPVTPEPTSQATRGRTNRSSVKT and QPSTSRNQLVTPEPTSRA. S1646 carries the phosphoserine modification. Phosphothreonine is present on residues T1649 and T1671. At S1686 the chain carries Phosphoserine. Position 1690 is a phosphothreonine (T1690). Pro residues predominate over residues 1693–1702; it reads PVVPTAPEPH. Positions 1706 to 1718 are enriched in polar residues; the sequence is STDQPVTPKLTSR. Residues T1712, T1746, and T1753 each carry the phosphothreonine modification. Residues 1760–1771 are compositionally biased toward polar residues; sequence GGQSKTLRSSTV. Phosphoserine is present on S1763. T1779 is subject to Phosphothreonine. Polar residues predominate over residues 1780 to 1801; the sequence is PEFQSPVTTDQPISPEPITQPS. The required for nuclear localization (NLS2) stretch occupies residues 1780-2171; it reads PEFQSPVTTD…VLSPLEMSST (392 aa). Phosphoserine is present on residues S1784 and S1793. K1822 participates in a covalent cross-link: Glycyl lysine isopeptide (Lys-Gly) (interchain with G-Cter in SUMO2). Phosphoserine is present on S1857. K1872 is covalently cross-linked (Glycyl lysine isopeptide (Lys-Gly) (interchain with G-Cter in SUMO2)). Phosphothreonine is present on T1882. S1902 carries the post-translational modification Phosphoserine. Polar residues predominate over residues 1905–1918; it reads HQKQPQRGEVSQKT. K1922 is covalently cross-linked (Glycyl lysine isopeptide (Lys-Gly) (interchain with G-Cter in SUMO1); alternate). A Glycyl lysine isopeptide (Lys-Gly) (interchain with G-Cter in SUMO2); alternate cross-link involves residue K1922. Positions 1929–1939 are enriched in basic and acidic residues; that stretch reads AEKPGKEEDVV. Residue T1940 is modified to Phosphothreonine. 2 consecutive BRCT domains span residues 1974 to 2052 and 2073 to 2164; these read APKV…EYVV and RERR…FVLS. R2025 carries the post-translational modification Omega-N-methylarginine.

In terms of assembly, homodimer. Interacts with H2AX, which requires phosphorylation of H2AX on 'Ser-139'. Interacts with the MRN complex, composed of MRE11, RAD50, and NBN. Interacts with CHEK2, which requires ATM-mediated phosphorylation of 'Thr-68' within the FHA domain of CHEK2. Interacts constitutively with the BRCA1-BARD1 complex, SMC1A and TP53BP1. Interacts with ATM and FANCD2, and these interactions are reduced upon DNA damage. Also interacts with the PRKDC complex, composed of XRCC6/KU70, XRCC5/KU80 and PRKDC/XRCC7. This interaction may be required for PRKDC autophosphorylation, which is essential for DNA double strand break (DSB) repair. When phosphorylated by ATM, interacts with RNF8 (via FHA domain). Interacts with CEP164. When phosphorylated, interacts with APTX (via FHA-like domain). Interacts (when phosphorylated) with TOPBP1; promoting TOPBP1 localization to DNA damage sites during mitosis. Interacts (when phosphorylated) with NBN; promoting NBN and MRN complex localization to DNA damage sites. In terms of processing, phosphorylated upon exposure to ionizing radiation (IR), ultraviolet radiation (UV), and hydroxyurea (HU). Phosphorylation in response to IR requires ATM, NBN, and possibly CHEK2. Also phosphorylated during the G2/M phase of the cell cycle and during activation of the mitotic spindle checkpoint. Phosphorylation at Thr-4 by ATM stabilizes and enhances homodimerization via the FHA domain. Phosphorylated at Ser-168 and Ser-196 by CK2 in response to DNA damage during mitosis, promoting interaction with TOPBP1. Phosphorylated by CK2 in response to DNA damage, promoting interaction with NBN and recruitment of the MRN complex to DNA damage sites. Sumoylation at Lys-1922 by PIAS4 following DNA damage promotes ubiquitin-mediated degradation. Post-translationally, ubiquitinated by RNF4, leading to proteasomal degradation; undergoes 'Lys-48'-linked polyubiquitination.

It localises to the nucleus. The protein localises to the chromosome. Its function is as follows. Histone reader protein required for checkpoint-mediated cell cycle arrest in response to DNA damage within both the S phase and G2/M phases of the cell cycle. Specifically recognizes and binds histone H2AX phosphorylated at 'Ser-139', a marker of DNA damage, serving as a scaffold for the recruitment of DNA repair and signal transduction proteins to discrete foci of DNA damage sites. Also required for downstream events subsequent to the recruitment of these proteins. These include phosphorylation and activation of the ATM, CHEK1 and CHEK2 kinases, and stabilization of TP53/p53 and apoptosis. ATM and CHEK2 may also be activated independently by a parallel pathway mediated by TP53BP1. Required for chromosomal stability during mitosis by promoting recruitment of TOPBP1 to DNA double strand breaks (DSBs): TOPBP1 forms filamentous assemblies that bridge MDC1 and tether broken chromosomes during mitosis. Required for the repair of DSBs via homologous recombination by promoting recruitment of NBN component of the MRN complex to DSBs. In Pan troglodytes (Chimpanzee), this protein is Mediator of DNA damage checkpoint protein 1 (MDC1).